Consider the following 1356-residue polypeptide: Pleckstrin homology domain-containing family H member 1 (1356 aa).

A coiled-coil region spans residues Phe27–Thr172. 3 disordered regions span residues Val179 to Ser203, His256 to Arg314, and Leu354 to His414. Composition is skewed to polar residues over residues Pro194 to Ser203, His256 to Gln265, and Val285 to Thr297. Residues Ser359–Lys407 are a coiled coil. 2 stretches are compositionally biased toward basic and acidic residues: residues Ser362–Met377 and Lys385–Leu399. A Phosphoserine modification is found at Ser451. 2 consecutive PH domains span residues Ala572–Lys666 and Lys681–Gly790. A Phosphoserine modification is found at Ser739. Residues Tyr826–Leu980 enclose the MyTH4 domain. Residues Phe991–Ser1327 form the FERM domain.

In Mus musculus (Mouse), this protein is Pleckstrin homology domain-containing family H member 1 (Plekhh1).